The primary structure comprises 652 residues: Acetyl-coenzyme A synthetase (652 aa).

CoA contacts are provided by residues 191 to 194 (RAGR), Thr-311, and Asn-335. Residues 387 to 389 (GEP), 411 to 416 (DTWWQT), Asp-500, and Arg-515 each bind ATP. Ser-523 serves as a coordination point for CoA. Arg-526 serves as a coordination point for ATP. 3 residues coordinate Mg(2+): Val-537, His-539, and Ile-542. A CoA-binding site is contributed by Arg-584. Lys-609 carries the post-translational modification N6-acetyllysine.

It belongs to the ATP-dependent AMP-binding enzyme family. The cofactor is Mg(2+). Post-translationally, acetylated. Deacetylation by the SIR2-homolog deacetylase activates the enzyme.

It catalyses the reaction acetate + ATP + CoA = acetyl-CoA + AMP + diphosphate. Functionally, catalyzes the conversion of acetate into acetyl-CoA (AcCoA), an essential intermediate at the junction of anabolic and catabolic pathways. Acs undergoes a two-step reaction. In the first half reaction, Acs combines acetate with ATP to form acetyl-adenylate (AcAMP) intermediate. In the second half reaction, it can then transfer the acetyl group from AcAMP to the sulfhydryl group of CoA, forming the product AcCoA. In terms of biological role, enables the cell to use acetate during aerobic growth to generate energy via the TCA cycle, and biosynthetic compounds via the glyoxylate shunt. Acetylates CheY, the response regulator involved in flagellar movement and chemotaxis. The protein is Acetyl-coenzyme A synthetase of Salmonella typhi.